The chain runs to 286 residues: Bifunctional protein FolD (286 aa).

NADP(+) is bound by residues 165 to 167 (GRS) and Ser-190.

It belongs to the tetrahydrofolate dehydrogenase/cyclohydrolase family. Homodimer.

It carries out the reaction (6R)-5,10-methylene-5,6,7,8-tetrahydrofolate + NADP(+) = (6R)-5,10-methenyltetrahydrofolate + NADPH. It catalyses the reaction (6R)-5,10-methenyltetrahydrofolate + H2O = (6R)-10-formyltetrahydrofolate + H(+). Its pathway is one-carbon metabolism; tetrahydrofolate interconversion. In terms of biological role, catalyzes the oxidation of 5,10-methylenetetrahydrofolate to 5,10-methenyltetrahydrofolate and then the hydrolysis of 5,10-methenyltetrahydrofolate to 10-formyltetrahydrofolate. This chain is Bifunctional protein FolD, found in Burkholderia lata (strain ATCC 17760 / DSM 23089 / LMG 22485 / NCIMB 9086 / R18194 / 383).